Consider the following 930-residue polypeptide: Isoleucine--tRNA ligase (930 aa).

The short motif at 57–67 (PYANGNIHVGH) is the 'HIGH' region element. Residue Glu554 coordinates L-isoleucyl-5'-AMP. Residues 595–599 (KMSKS) carry the 'KMSKS' region motif. Residue Lys598 participates in ATP binding. Positions 888, 891, 908, and 911 each coordinate Zn(2+).

Belongs to the class-I aminoacyl-tRNA synthetase family. IleS type 1 subfamily. As to quaternary structure, monomer. Requires Zn(2+) as cofactor.

It is found in the cytoplasm. The enzyme catalyses tRNA(Ile) + L-isoleucine + ATP = L-isoleucyl-tRNA(Ile) + AMP + diphosphate. In terms of biological role, catalyzes the attachment of isoleucine to tRNA(Ile). As IleRS can inadvertently accommodate and process structurally similar amino acids such as valine, to avoid such errors it has two additional distinct tRNA(Ile)-dependent editing activities. One activity is designated as 'pretransfer' editing and involves the hydrolysis of activated Val-AMP. The other activity is designated 'posttransfer' editing and involves deacylation of mischarged Val-tRNA(Ile). The protein is Isoleucine--tRNA ligase of Streptococcus gordonii (strain Challis / ATCC 35105 / BCRC 15272 / CH1 / DL1 / V288).